The chain runs to 380 residues: Large ribosomal subunit protein mL38 (380 aa).

Residues 1 to 26 constitute a mitochondrion transit peptide; sequence MAAPWWRAALCECRRWRGFSTSAVLG. Residues 99-127 adopt a coiled-coil conformation; the sequence is RTQQLLERKQAIQELRANVEEERAARLRT.

This sequence belongs to the phosphatidylethanolamine-binding protein family. Mitochondrion-specific ribosomal protein mL38 subfamily. As to quaternary structure, component of the mitochondrial large ribosomal subunit (mt-LSU). Mature mammalian 55S mitochondrial ribosomes consist of a small (28S) and a large (39S) subunit. The 28S small subunit contains a 12S ribosomal RNA (12S mt-rRNA) and 30 different proteins. The 39S large subunit contains a 16S rRNA (16S mt-rRNA), a copy of mitochondrial valine transfer RNA (mt-tRNA(Val)), which plays an integral structural role, and 52 different proteins. mL38 is located at the central protuberance.

It is found in the mitochondrion. This Homo sapiens (Human) protein is Large ribosomal subunit protein mL38 (MRPL38).